A 1285-amino-acid chain; its full sequence is MTARGKNVKIQTLATENEIFLYDRRYVSEQDNADLPKLPSPQPLVLDKPPDTLSDRNDLQAWRNLYAARKTWAAELTERCEMADTSIRELNERTGIVNRAASVALENLKTHVAALENRFQEAQAWAKELSREQKSALEEWKRALANLENIPARKEFSFLGRPSTPKKDADRATGTLLDYVDAVEVQKAGPEASAASSRFAQQIQDIERAVGEITAGTQRLLDDVPNSRTDTADGLLQEIEPLSRKIQSDYEHVLGLSNNSKTLANISRLALNHTQDILPSMLEIAMEIRESLAAAVRQYDAATKSALGRTKLISAIQSRLADVQAHIANLTFQSDAFDLLYSVFHMPLVYGSVLIESVRRHEFNEKMKSDSLTLAEELSIFQDEEQRRRKKWVKNMEDFLSVTDTTTPGIEVNLRGHEFDWPIVTRKDIETYIEDLRSNPGTANAAQELAQAFKELDAPTRVQRRRAKAFKQGSIFDLSRSSLLLHSDEIVRSLRDEKLKLEEKLRGSESRIRKLEDLLHRHSHLGRPSSGNFSIDFPASPASPHPDPMSRRSSVSSRRLSSNQTSEEKNLVNRIVHLEADLAIERETVQRLQREADAERQSNTNKMQEAQSTKNDLIGNLEARQREFSDERRYLEGEVKRFKIRVEELEEELDRLTDSRDHEKQDADERMHQLELELQDAHARADAEMRKANNLLEQMQSHREAADRSKLRMDELEKQATERTQKDQEVRHALQAAFMNLSPGGSVPDEIVDIIKAIDVLSEGLTIHAKTAEDNAMKAAAENKTLIEQLEKMESNYENAKSASEQYQTQLTQAREEVEQEQSKVKAIESELNDERASLLELESKLAAGETGAGALREHVAEEEQKLNNMSQQLAETEARARRSEEEALQWRKRAEALSESDKQVAARIDIRTARLEELSRQLFGQVEKLERMLEQLGFTVIRQDGEIVVQRSSKVNALSATADTLSQSGVVSVKPDPSLLNWMQGEHPEEETERFNAFLESLHQFSVDIFGDAVVKRVKDIEVLARKWQKEARGYRDKYHRMQSEAHDKIAYRSFKEGDLALFLPTRNQAIRSWAAFNVGAPHYFLREQDVHKLQARDWLLARITKIEERVVDLSKSMNGGNPDRRSIGEASDGASIDDENPFELSDGLRWYLLDATEEKPGAPATPGLGKSTVAPAHVDAKGSIRLKRTPAGGNVTKTLTRSLDSRRNSSASASIKRGTPPSRANDSTTDLVRPAQAESESIAAATDSKSQSQSQSQERERRQEAQGTAVIFDEVRRDQLQGP.

Positions 32–52 are disordered; it reads NADLPKLPSPQPLVLDKPPDT. Coiled-coil stretches lie at residues 73–150 and 486–523; these read AAEL…LENI and HSDEIVRSLRDEKLKLEEKLRGSESRIRKLEDLLHRHS. Disordered stretches follow at residues 523–568 and 595–615; these read SHLG…TSEE and EADAERQSNTNKMQEAQSTKN. Residues 551–562 are compositionally biased toward low complexity; sequence RRSSVSSRRLSS. Coiled-coil stretches lie at residues 563-726 and 769-937; these read NQTS…RTQK and AKTA…LEQL. Positions 601–615 are enriched in polar residues; it reads QSNTNKMQEAQSTKN. 2 disordered regions span residues 1116 to 1142 and 1181 to 1285; these read SKSMNGGNPDRRSIGEASDGASIDDEN and DAKG…LQGP. Polar residues predominate over residues 1197–1215; sequence VTKTLTRSLDSRRNSSASA. Residues 1275–1285 are compositionally biased toward basic and acidic residues; it reads DEVRRDQLQGP.

It belongs to the ATG11 family. As to quaternary structure, homodimer.

It localises to the preautophagosomal structure membrane. Its subcellular location is the vacuole membrane. Its function is as follows. Involved in cytoplasm to vacuole transport (Cvt), pexophagy, mitophagy and nucleophagy. Recruits mitochondria for their selective degradation via autophagy (mitophagy) during starvation. Works as scaffold proteins that recruit ATG proteins to the pre-autophagosome (PAS), the site of vesicle/autophagosome formation. Required for the Cvt vesicles completion. The sequence is that of Autophagy-related protein 11 (atg11) from Emericella nidulans (strain FGSC A4 / ATCC 38163 / CBS 112.46 / NRRL 194 / M139) (Aspergillus nidulans).